A 101-amino-acid chain; its full sequence is Nucleoid-associated protein Acid345_1974 (101 aa).

It belongs to the YbaB/EbfC family. Homodimer.

It localises to the cytoplasm. It is found in the nucleoid. Its function is as follows. Binds to DNA and alters its conformation. May be involved in regulation of gene expression, nucleoid organization and DNA protection. This is Nucleoid-associated protein Acid345_1974 from Koribacter versatilis (strain Ellin345).